The sequence spans 767 residues: RNA cytosine C(5)-methyltransferase NSUN2 (767 aa).

Residues 1 to 36 form a disordered region; the sequence is MGRRSRGRRLQQQQRPEDAEDGAEGGGKRGEAGWEG. Lys-46 participates in a covalent cross-link: Glycyl lysine isopeptide (Lys-Gly) (interchain with G-Cter in SUMO2). Ser-139 carries the phosphoserine; by AURKB modification. Residues 184 to 190, Asp-215, Asp-242, and Asp-268 contribute to the S-adenosyl-L-methionine site; that span reads CAAPGSK. The Nucleophile role is filled by Cys-321. The tract at residues 436–481 is disordered; it reads NKRQPKLQGKSAETRESTQLSPADLTEGKPTDPSKLESPSFTGTGD. Ser-456 carries the post-translational modification Phosphoserine. Positions 461–470 are enriched in basic and acidic residues; the sequence is TEGKPTDPSK. Residues Lys-464 and Lys-470 each participate in a glycyl lysine isopeptide (Lys-Gly) (interchain with G-Cter in SUMO2) cross-link. Ser-473 carries the phosphoserine modification. Residues Lys-511 and Lys-516 each participate in a glycyl lysine isopeptide (Lys-Gly) (interchain with G-Cter in SUMO2) cross-link. Lys-586 is subject to N6-acetyllysine; alternate. Lys-586 bears the N6-malonyllysine; alternate mark. A Glycyl lysine isopeptide (Lys-Gly) (interchain with G-Cter in SUMO2); alternate cross-link involves residue Lys-586. Residue Ser-593 is modified to Phosphoserine. Glycyl lysine isopeptide (Lys-Gly) (interchain with G-Cter in SUMO2) cross-links involve residues Lys-640, Lys-654, and Lys-660. Thr-718 carries the phosphothreonine modification. The segment covering 719-730 has biased composition (polar residues); the sequence is NESAASTGQPDN. The tract at residues 719-767 is disordered; sequence NESAASTGQPDNDVTEGQRAGEPNSPDAEEANSPDVTAGCDPAGVHPPR. Residues Ser-724, Ser-743, and Ser-751 each carry the phosphoserine modification.

Belongs to the class I-like SAM-binding methyltransferase superfamily. RsmB/NOP family. TRM4 subfamily. As to quaternary structure, interacts with NPM1 and NCL during interphase; interaction is disrupted following phosphorylation at Ser-139. Phosphorylated at Ser-139 by AURKB during mitosis, leading to abolish methyltransferase activity and the interaction with NPM1. Expressed in adult and fetal brain and in lymphoblastoid cells.

The protein resides in the nucleus. It is found in the nucleolus. The protein localises to the cytoplasm. Its subcellular location is the mitochondrion. It localises to the cytoskeleton. The protein resides in the spindle. It is found in the secreted. The protein localises to the extracellular exosome. The catalysed reaction is cytidine(48) in tRNA + S-adenosyl-L-methionine = 5-methylcytidine(48) in tRNA + S-adenosyl-L-homocysteine + H(+). The enzyme catalyses cytidine(49) in tRNA + S-adenosyl-L-methionine = 5-methylcytidine(49) in tRNA + S-adenosyl-L-homocysteine + H(+). It carries out the reaction cytidine(50) in tRNA + S-adenosyl-L-methionine = 5-methylcytidine(50) in tRNA + S-adenosyl-L-homocysteine + H(+). It catalyses the reaction cytidine(34) in tRNA precursor + S-adenosyl-L-methionine = 5-methylcytidine(34) in tRNA precursor + S-adenosyl-L-homocysteine + H(+). The catalysed reaction is a cytidine in mRNA + S-adenosyl-L-methionine = a 5-methylcytidine in mRNA + S-adenosyl-L-homocysteine + H(+). With respect to regulation, inhibited by magnesium ions. RNA cytosine C(5)-methyltransferase that methylates cytosine to 5-methylcytosine (m5C) in various RNAs, such as tRNAs, mRNAs and some long non-coding RNAs (lncRNAs). Involved in various processes, such as epidermal stem cell differentiation, testis differentiation and maternal to zygotic transition during early development: acts by increasing protein synthesis; cytosine C(5)-methylation promoting tRNA stability and preventing mRNA decay. Methylates cytosine to 5-methylcytosine (m5C) at positions 34 and 48 of intron-containing tRNA(Leu)(CAA) precursors, and at positions 48, 49 and 50 of tRNA(Gly)(GCC) precursors. tRNA methylation is required generation of RNA fragments derived from tRNAs (tRFs). Also mediates C(5)-methylation of mitochondrial tRNAs. Catalyzes cytosine C(5)-methylation of mRNAs, leading to stabilize them and prevent mRNA decay: mRNA stabilization involves YBX1 that specifically recognizes and binds m5C-modified transcripts. Cytosine C(5)-methylation of mRNAs also regulates mRNA export: methylated transcripts are specifically recognized by THOC4/ALYREF, which mediates mRNA nucleo-cytoplasmic shuttling. Also mediates cytosine C(5)-methylation of non-coding RNAs, such as vault RNAs (vtRNAs), promoting their processing into regulatory small RNAs. Cytosine C(5)-methylation of vtRNA VTRNA1.1 promotes its processing into small-vault RNA4 (svRNA4) and regulates epidermal differentiation. May act downstream of Myc to regulate epidermal cell growth and proliferation. Required for proper spindle assembly and chromosome segregation, independently of its methyltransferase activity. This Homo sapiens (Human) protein is RNA cytosine C(5)-methyltransferase NSUN2.